The sequence spans 464 residues: Ribosomal protein uS12 methylthiotransferase RimO (464 aa).

Residues 14 to 125 (PTVAFAHLGC…IVEVLQRVEA (112 aa)) enclose the MTTase N-terminal domain. [4Fe-4S] cluster is bound by residues Cys-23, Cys-59, Cys-88, Cys-163, Cys-167, and Cys-170. A Radical SAM core domain is found at 149-378 (TTDQAVAFLK…MALQQPISAE (230 aa)). The TRAM domain maps to 381–452 (HSWVSRTVDV…VYDLSGRIVG (72 aa)).

Belongs to the methylthiotransferase family. RimO subfamily. [4Fe-4S] cluster serves as cofactor.

It localises to the cytoplasm. It catalyses the reaction L-aspartate(89)-[ribosomal protein uS12]-hydrogen + (sulfur carrier)-SH + AH2 + 2 S-adenosyl-L-methionine = 3-methylsulfanyl-L-aspartate(89)-[ribosomal protein uS12]-hydrogen + (sulfur carrier)-H + 5'-deoxyadenosine + L-methionine + A + S-adenosyl-L-homocysteine + 2 H(+). In terms of biological role, catalyzes the methylthiolation of an aspartic acid residue of ribosomal protein uS12. The chain is Ribosomal protein uS12 methylthiotransferase RimO from Parasynechococcus marenigrum (strain WH8102).